A 436-amino-acid polypeptide reads, in one-letter code: Phosphomethylpyrimidine synthase (436 aa).

Substrate-binding positions include Asn-69, Met-98, Tyr-127, His-163, 185–187, 226–229, and Glu-265; these read SRG and DACR. Position 269 (His-269) interacts with Zn(2+). Residue Tyr-292 participates in substrate binding. His-333 serves as a coordination point for Zn(2+). [4Fe-4S] cluster-binding residues include Cys-409, Cys-412, and Cys-416.

Belongs to the ThiC family. [4Fe-4S] cluster is required as a cofactor.

It catalyses the reaction 5-amino-1-(5-phospho-beta-D-ribosyl)imidazole + S-adenosyl-L-methionine = 4-amino-2-methyl-5-(phosphooxymethyl)pyrimidine + CO + 5'-deoxyadenosine + formate + L-methionine + 3 H(+). It participates in cofactor biosynthesis; thiamine diphosphate biosynthesis. In terms of biological role, catalyzes the synthesis of the hydroxymethylpyrimidine phosphate (HMP-P) moiety of thiamine from aminoimidazole ribotide (AIR) in a radical S-adenosyl-L-methionine (SAM)-dependent reaction. This Clostridium acetobutylicum (strain ATCC 824 / DSM 792 / JCM 1419 / IAM 19013 / LMG 5710 / NBRC 13948 / NRRL B-527 / VKM B-1787 / 2291 / W) protein is Phosphomethylpyrimidine synthase.